Reading from the N-terminus, the 403-residue chain is Protein STRICTOSIDINE SYNTHASE-LIKE 13 (403 aa).

Residues 1 to 42 (MEKKGQHGTYESMMTHHPILCIIALSVLFIAIDPFHMSPIGG) form the signal peptide. N-linked (GlcNAc...) asparagine glycosylation is found at N66 and N206.

Belongs to the strictosidine synthase family.

The protein resides in the vacuole. Required for the exine formation during pollen development. The chain is Protein STRICTOSIDINE SYNTHASE-LIKE 13 from Arabidopsis thaliana (Mouse-ear cress).